The primary structure comprises 317 residues: Apolipoprotein E (317 aa).

Positions 1-18 are cleaved as a signal peptide; it reads MRVLWVALVVTLLAGCRT. 8 repeat units span residues 79–100, 101–122, 123–144, 145–166, 167–188, 189–210, 211–232, and 233–254. Positions 79–254 are 8 X 22 AA approximate tandem repeats; that stretch reads ELIEESMKEV…RLDEMRDELE (176 aa). Met142 carries the post-translational modification Methionine sulfoxide. The segment at 157–167 is LDL and other lipoprotein receptors binding; the sequence is HLRNVRKRLVR. Position 161 to 164 (161 to 164) interacts with heparin; it reads VRKR. Positions 209-289 are lipid-binding and lipoprotein association; the sequence is AATLSTRAGQ…GWFEPLVEDM (81 aa). 228-235 contacts heparin; that stretch reads GQKLRGRL. The interval 265–317 is homooligomerization; it reads SQLRLQAEAFQARLKGWFEPLVEDMRRQWAGLVERMQSAVSISSSTSAPSDNQ. The tract at residues 277–289 is specificity for association with VLDL; that stretch reads RLKGWFEPLVEDM.

It belongs to the apolipoprotein A1/A4/E family. Homotetramer. May interact with ABCA1; functionally associated with ABCA1 in the biogenesis of HDLs. May interact with APP/A4 amyloid-beta peptide; the interaction is extremely stable in vitro but its physiological significance is unclear. May interact with MAPT. May interact with MAP2. In the cerebrospinal fluid, interacts with secreted SORL1. Interacts with PMEL; this allows the loading of PMEL luminal fragment on ILVs to induce fibril nucleation. APOE exists as multiple glycosylated and sialylated glycoforms within cells and in plasma. The extent of glycosylation and sialylation are tissue and context specific. In terms of processing, glycated in plasma VLDL. Post-translationally, phosphorylated by FAM20C in the extracellular medium.

Its subcellular location is the secreted. The protein resides in the extracellular space. It is found in the extracellular matrix. It localises to the extracellular vesicle. The protein localises to the endosome. Its subcellular location is the multivesicular body. APOE is an apolipoprotein, a protein associating with lipid particles, that mainly functions in lipoprotein-mediated lipid transport between organs via the plasma and interstitial fluids. APOE is a core component of plasma lipoproteins and is involved in their production, conversion and clearance. Apolipoproteins are amphipathic molecules that interact both with lipids of the lipoprotein particle core and the aqueous environment of the plasma. As such, APOE associates with chylomicrons, chylomicron remnants, very low density lipoproteins (VLDL) and intermediate density lipoproteins (IDL) but shows a preferential binding to high-density lipoproteins (HDL). It also binds a wide range of cellular receptors including the LDL receptor/LDLR and the very low-density lipoprotein receptor/VLDLR that mediate the cellular uptake of the APOE-containing lipoprotein particles. Finally, APOE also has a heparin-binding activity and binds heparan-sulfate proteoglycans on the surface of cells, a property that supports the capture and the receptor-mediated uptake of APOE-containing lipoproteins by cells. The protein is Apolipoprotein E (APOE) of Sus scrofa (Pig).